The sequence spans 117 residues: Large ribosomal subunit protein uL24 (117 aa).

Residues 1–12 (MSKKNSQTSPQR) are compositionally biased toward polar residues. The interval 1–20 (MSKKNSQTSPQRQKMHVKKG) is disordered.

This sequence belongs to the universal ribosomal protein uL24 family. In terms of assembly, part of the 50S ribosomal subunit.

Functionally, one of two assembly initiator proteins, it binds directly to the 5'-end of the 23S rRNA, where it nucleates assembly of the 50S subunit. Its function is as follows. One of the proteins that surrounds the polypeptide exit tunnel on the outside of the subunit. In Microcystis aeruginosa (strain NIES-843 / IAM M-2473), this protein is Large ribosomal subunit protein uL24.